The chain runs to 110 residues: Methionine-R-sulfoxide reductase B1-A (110 aa).

The 104-residue stretch at methionine 1–lysine 104 folds into the MsrB domain. Zn(2+) contacts are provided by cysteine 23, cysteine 26, cysteine 69, and cysteine 72. Catalysis depends on selenocysteine 93, which acts as the Nucleophile. Position 93 (selenocysteine 93) is a non-standard amino acid, selenocysteine.

Belongs to the MsrB Met sulfoxide reductase family. The cofactor is Zn(2+). In terms of tissue distribution, in the embryo, expressed in the polster, paraxial mesoderm, tectum, otic vesicle and liver.

It is found in the cytoplasm. It localises to the nucleus. The protein localises to the cytoskeleton. It catalyses the reaction L-methionyl-[protein] + [thioredoxin]-disulfide + H2O = L-methionyl-(R)-S-oxide-[protein] + [thioredoxin]-dithiol. The enzyme catalyses [thioredoxin]-disulfide + L-methionine + H2O = L-methionine (R)-S-oxide + [thioredoxin]-dithiol. Functionally, methionine-sulfoxide reductase that specifically reduces methionine (R)-sulfoxide back to methionine. While in many cases, methionine oxidation is the result of random oxidation following oxidative stress, methionine oxidation is also a post-translational modification that takes place on specific residue. Acts as a regulator of actin assembly by reducing methionine (R)-sulfoxide mediated by MICALs (mical1, mical2 or mical3) on actin, thereby promoting filament repolymerization. Plays a role in innate immunity by reducing oxidized actin, leading to actin repolymerization in macrophages. This Danio rerio (Zebrafish) protein is Methionine-R-sulfoxide reductase B1-A (msrb1).